The chain runs to 236 residues: Aspartate/glutamate leucyltransferase (236 aa).

Belongs to the R-transferase family. Bpt subfamily.

It localises to the cytoplasm. It catalyses the reaction N-terminal L-glutamyl-[protein] + L-leucyl-tRNA(Leu) = N-terminal L-leucyl-L-glutamyl-[protein] + tRNA(Leu) + H(+). It carries out the reaction N-terminal L-aspartyl-[protein] + L-leucyl-tRNA(Leu) = N-terminal L-leucyl-L-aspartyl-[protein] + tRNA(Leu) + H(+). Its function is as follows. Functions in the N-end rule pathway of protein degradation where it conjugates Leu from its aminoacyl-tRNA to the N-termini of proteins containing an N-terminal aspartate or glutamate. The protein is Aspartate/glutamate leucyltransferase of Halorhodospira halophila (strain DSM 244 / SL1) (Ectothiorhodospira halophila (strain DSM 244 / SL1)).